A 495-amino-acid polypeptide reads, in one-letter code: Nuclear receptor subfamily 6 group A member 1 (495 aa).

The segment at 1–34 is disordered; that stretch reads MERDERPPSGGGGGGGSAGFLEPPAALPPPPRNG. Residues 9 to 18 are compositionally biased toward gly residues; sequence SGGGGGGGSA. The segment at residues 72-147 is a DNA-binding region (nuclear receptor); it reads QRTCLICGDR…MGMNRKAIRE (76 aa). Zn(2+) is bound by residues C75, C78, C92, C95, C111, C117, C127, and C130. NR C4-type zinc fingers lie at residues 75 to 95 and 111 to 135; these read CLIC…CEGC and CSRD…LLKC. Disordered regions lie at residues 145–165 and 177–214; these read IRED…QISE and FEEE…LSSS. A compositionally biased stretch (basic and acidic residues) spans 180 to 192; sequence EANHWSNHGDSDH. The interval 187–268 is sufficient for interaction with UIMC1; it reads HGDSDHSSPG…RSLDPQSYSL (82 aa). Low complexity predominate over residues 202 to 214; it reads SNQPSPGSTLSSS. Positions 264–495 constitute an NR LBD domain; that stretch reads QSYSLIHQLM…HSCKTSTVKE (232 aa).

It belongs to the nuclear hormone receptor family. NR6 subfamily. Homodimer. Interacts with UIMC1. As to expression, expressed in the germ cells of both the adult testis and ovary, being most abundant in spermatids.

It is found in the nucleus. Functionally, orphan nuclear receptor that binds to a response element containing the sequence 5'-TCAAGGTCA-3'. Acts as a regulator of embryonic stem cell pluripotency by mediating repression of POU5F1/OCT4: binds to the DR0 element within the POU5F1/OCT4 promoter and inhibits POU5F1/OCT4 expression during embryonic stem cell differentiation. Required to restrict POU5F1/OCT4 expression to the germ cell lineage. Involved in the regulation of gene expression in germ cell development during gametogenesis. In Mus musculus (Mouse), this protein is Nuclear receptor subfamily 6 group A member 1 (Nr6a1).